A 151-amino-acid chain; its full sequence is Cytochrome c-type biogenesis protein CcmE (151 aa).

Residues Met1–Arg8 lie on the Cytoplasmic side of the membrane. A helical; Signal-anchor for type II membrane protein transmembrane segment spans residues Leu9–Ala29. At Leu30–Pro151 the chain is on the periplasmic side. Residues His124 and Tyr128 each coordinate heme.

It belongs to the CcmE/CycJ family.

The protein localises to the cell inner membrane. Heme chaperone required for the biogenesis of c-type cytochromes. Transiently binds heme delivered by CcmC and transfers the heme to apo-cytochromes in a process facilitated by CcmF and CcmH. This is Cytochrome c-type biogenesis protein CcmE from Pseudomonas putida (strain ATCC 700007 / DSM 6899 / JCM 31910 / BCRC 17059 / LMG 24140 / F1).